A 378-amino-acid polypeptide reads, in one-letter code: tRNA (guanine(26)-N(2))-dimethyltransferase (378 aa).

A Trm1 methyltransferase domain is found at 4–374; that stretch reads KEVTEGKVRI…KGYEEIIRCV (371 aa). Residues Arg-44, Arg-69, Asp-87, Asp-114, and Ala-115 each coordinate S-adenosyl-L-methionine. The Zn(2+) site is built by Cys-246, Cys-249, Cys-263, and Cys-266.

This sequence belongs to the class I-like SAM-binding methyltransferase superfamily. Trm1 family.

It catalyses the reaction guanosine(26) in tRNA + 2 S-adenosyl-L-methionine = N(2)-dimethylguanosine(26) in tRNA + 2 S-adenosyl-L-homocysteine + 2 H(+). In terms of biological role, dimethylates a single guanine residue at position 26 of a number of tRNAs using S-adenosyl-L-methionine as donor of the methyl groups. The sequence is that of tRNA (guanine(26)-N(2))-dimethyltransferase from Saccharolobus islandicus (strain M.16.27) (Sulfolobus islandicus).